The sequence spans 180 residues: Inosine/xanthosine triphosphatase (180 aa).

Substrate is bound at residue 8–13 (TTNPAK). Mg(2+)-binding residues include D38 and E68. Position 68–69 (68–69 (EA)) interacts with substrate.

The protein belongs to the YjjX NTPase family. Homodimer. The cofactor is Mg(2+). Mn(2+) is required as a cofactor.

The enzyme catalyses XTP + H2O = XDP + phosphate + H(+). The catalysed reaction is ITP + H2O = IDP + phosphate + H(+). Its function is as follows. Phosphatase that hydrolyzes non-canonical purine nucleotides such as XTP and ITP to their respective diphosphate derivatives. Probably excludes non-canonical purines from DNA/RNA precursor pool, thus preventing their incorporation into DNA/RNA and avoiding chromosomal lesions. This chain is Inosine/xanthosine triphosphatase, found in Yersinia pseudotuberculosis serotype IB (strain PB1/+).